A 356-amino-acid chain; its full sequence is Septin-12 (356 aa).

A disordered region spans residues 1–23; it reads MDERRTPSPCSSRPSSPRTPPCE. A compositionally biased stretch (low complexity) spans 7-16; sequence PSPCSSRPSS. One can recognise a Septin-type G domain in the interval 44-315; the sequence is TGFEFNIMVV…ENYRVLRLNE (272 aa). Residues 44–317 form an interaction with SEPTIN7 region; the sequence is TGFEFNIMVV…YRVLRLNESH (274 aa). The G1 motif stretch occupies residues 54–61; the sequence is GQSGLGKS. GTP contacts are provided by residues 54 to 61, Thr-87, Gly-113, 193 to 201, Gly-249, and Arg-264; these read GQSGLGKS and RADSLTIEE. A G3 motif region spans residues 110 to 113; it reads DTPG. Residues 192–195 form a G4 motif region; the sequence is ARAD. A self-association (via N-terminus) to polymerize octameric septin 12-7-6-2/4-2/4-6-7-12 filaments region spans residues 256–356; that stretch reads VNGRCVLGRK…RSKDPRDDEC (101 aa). Residues 330–356 form a disordered region; sequence PASPGQLMAPGPEKVRKRSKDPRDDEC.

Belongs to the TRAFAC class TrmE-Era-EngA-EngB-Septin-like GTPase superfamily. Septin GTPase family. As to quaternary structure, septins polymerize into heterooligomeric protein complexes that form filaments, and can associate with cellular membranes, actin filaments and microtubules. GTPase activity is required for filament formation. Interacts with SEPTIN6 and SEPTIN11. Self-associates. Component of a octameric complex consisting of SEPTIN12, SEPTIN7, SEPTIN6 and SEPTIN2 or SEPTIN4 in the order 12-7-6-2-2-6-7-12 or 12-7-6-4-4-6-7-12 and located in the sperm annulus; the octamer polymerizes into filaments via the SEPTIN12 N- and C-termini; the SEPTIN12:SEPTIN7 association is mediated by the GTP-binding domains. Interacts with SPAG4 and LMNB1. Associates with alpha- and beta-tubulins. In terms of tissue distribution, predominantly expressed in testis and epididymis. Component of the sperm tail annulus (at protein level).

The protein resides in the cytoplasm. It localises to the cytoskeleton. The protein localises to the spindle. It is found in the cell projection. Its subcellular location is the cilium. The protein resides in the flagellum. Its function is as follows. Filament-forming cytoskeletal GTPase. May play a role in cytokinesis (Potential). Involved in spermatogenesis. Involved in the morphogenesis of sperm heads and the elongation of sperm tails probably implicating the association with alpha- and beta-tubulins. Forms a filamentous structure with SEPTIN7, SEPTIN6, SEPTIN2 and probably SEPTIN4 at the sperm annulus which is required for the structural integrity and motility of the sperm tail during postmeiotic differentiation. The protein is Septin-12 of Rattus norvegicus (Rat).